A 141-amino-acid chain; its full sequence is Large ribosomal subunit protein uL11 (141 aa).

It belongs to the universal ribosomal protein uL11 family. In terms of assembly, part of the ribosomal stalk of the 50S ribosomal subunit. Interacts with L10 and the large rRNA to form the base of the stalk. L10 forms an elongated spine to which L12 dimers bind in a sequential fashion forming a multimeric L10(L12)X complex. Post-translationally, one or more lysine residues are methylated.

Its function is as follows. Forms part of the ribosomal stalk which helps the ribosome interact with GTP-bound translation factors. This Clostridium kluyveri (strain ATCC 8527 / DSM 555 / NBRC 12016 / NCIMB 10680 / K1) protein is Large ribosomal subunit protein uL11.